We begin with the raw amino-acid sequence, 61 residues long: Small ribosomal subunit protein uS14 (61 aa).

Positions 24, 27, 40, and 43 each coordinate Zn(2+).

The protein belongs to the universal ribosomal protein uS14 family. Zinc-binding uS14 subfamily. Part of the 30S ribosomal subunit. Contacts proteins S3 and S10. Zn(2+) is required as a cofactor.

Functionally, binds 16S rRNA, required for the assembly of 30S particles and may also be responsible for determining the conformation of the 16S rRNA at the A site. This Anaeromyxobacter sp. (strain Fw109-5) protein is Small ribosomal subunit protein uS14.